Here is a 58-residue protein sequence, read N- to C-terminus: Sperm protamine P2 (58 aa).

Residues 1–58 are disordered; sequence RRRRRRGKGRGKKRKGKGKKRGKGRRRGSKGRKKKKGKGKKRKRRRRRRRKGSKGKGK.

Gonads.

It localises to the nucleus. The protein localises to the chromosome. Functionally, protamines substitute for histones in the chromatin of sperm during the haploid phase of spermatogenesis. They compact sperm DNA into a highly condensed, stable and inactive complex. This chain is Sperm protamine P2, found in Bolinus brandaris (Purple dye murex).